The sequence spans 311 residues: Aspartate carbamoyltransferase catalytic subunit (311 aa).

Positions 55 and 56 each coordinate carbamoyl phosphate. L-aspartate is bound at residue lysine 85. Carbamoyl phosphate-binding residues include arginine 106, histidine 135, and glutamine 138. Residues arginine 168 and arginine 230 each coordinate L-aspartate. Leucine 268 and proline 269 together coordinate carbamoyl phosphate.

It belongs to the aspartate/ornithine carbamoyltransferase superfamily. ATCase family. As to quaternary structure, heterododecamer (2C3:3R2) of six catalytic PyrB chains organized as two trimers (C3), and six regulatory PyrI chains organized as three dimers (R2).

It carries out the reaction carbamoyl phosphate + L-aspartate = N-carbamoyl-L-aspartate + phosphate + H(+). It functions in the pathway pyrimidine metabolism; UMP biosynthesis via de novo pathway; (S)-dihydroorotate from bicarbonate: step 2/3. Functionally, catalyzes the condensation of carbamoyl phosphate and aspartate to form carbamoyl aspartate and inorganic phosphate, the committed step in the de novo pyrimidine nucleotide biosynthesis pathway. This chain is Aspartate carbamoyltransferase catalytic subunit, found in Buchnera aphidicola subsp. Schizaphis graminum (strain Sg).